Here is an 81-residue protein sequence, read N- to C-terminus: Photosystem I iron-sulfur center (81 aa).

4Fe-4S ferredoxin-type domains follow at residues S2–W31 and G37–Y68. 8 residues coordinate [4Fe-4S] cluster: C11, C14, C17, C21, C48, C51, C54, and C58.

In terms of assembly, the eukaryotic PSI reaction center is composed of at least 11 subunits. [4Fe-4S] cluster serves as cofactor.

It is found in the plastid. The protein resides in the chloroplast thylakoid membrane. It carries out the reaction reduced [plastocyanin] + hnu + oxidized [2Fe-2S]-[ferredoxin] = oxidized [plastocyanin] + reduced [2Fe-2S]-[ferredoxin]. Apoprotein for the two 4Fe-4S centers FA and FB of photosystem I (PSI); essential for photochemical activity. FB is the terminal electron acceptor of PSI, donating electrons to ferredoxin. The C-terminus interacts with PsaA/B/D and helps assemble the protein into the PSI complex. Required for binding of PsaD and PsaE to PSI. PSI is a plastocyanin/cytochrome c6-ferredoxin oxidoreductase, converting photonic excitation into a charge separation, which transfers an electron from the donor P700 chlorophyll pair to the spectroscopically characterized acceptors A0, A1, FX, FA and FB in turn. This is Photosystem I iron-sulfur center from Phaeodactylum tricornutum (strain CCAP 1055/1).